Here is a 119-residue protein sequence, read N- to C-terminus: MHILDTVDAASLRTDVPQFRAGDTLKVHVNIIEGKNSRVQVFQGFVLGRQGDGIRETFTVRKVSFGVGVERTFPVHSPIIDKIEVVTKGDVRRAKLYYMRALRGKAAKIKEKRDFSTAK.

The protein belongs to the bacterial ribosomal protein bL19 family.

Its function is as follows. This protein is located at the 30S-50S ribosomal subunit interface and may play a role in the structure and function of the aminoacyl-tRNA binding site. This chain is Large ribosomal subunit protein bL19, found in Arthrobacter sp. (strain FB24).